The following is a 609-amino-acid chain: Cationic amino acid transporter 3, mitochondrial (609 aa).

The N-terminal 14 residues, 1–14, are a transit peptide targeting the mitochondrion; the sequence is MGCLRSLVRRKQFD. The next 14 membrane-spanning stretches (helical) occupy residues 38-58, 66-86, 104-124, 161-181, 190-210, 226-246, 270-290, 314-334, 361-381, 388-408, 474-494, 499-519, 534-554, and 558-578; these read LIAI…VGTV, ALAL…FCYA, ICIG…EYTI, IVVD…CCLG, GIVT…GSYL, FPYG…AYIG, ISLL…VGLV, AYLI…GSIL, QVPI…AFFM, GMVS…LLIV, IMFT…FLLP, YSLC…LICI, FICP…MYLL, and GAAT…VYIF.

Belongs to the amino acid-polyamine-organocation (APC) superfamily. Cationic amino acid transporter (CAT) (TC 2.A.3.3) family. In terms of tissue distribution, expressed in roots, stems, flowers, and leaves.

It is found in the mitochondrion membrane. In terms of biological role, permease involved in the transport of the cationic neutral or acidic amino acids. In Arabidopsis thaliana (Mouse-ear cress), this protein is Cationic amino acid transporter 3, mitochondrial (CAT3).